The sequence spans 177 residues: MSRVANNPVQLPSGVQVDLKGSDLSVKGSKGAMSLSVHSSVAVVQEDNVLTFAAKDGAKSSKAMAGTVRSLVNNMVTGVSVGFEKKLQLVGVGYRTKVTGNVLNLTLGFSHPVDYVLPEGVTAETPTQTEIVLKCSDKQLLGQVAAEIRAFRPPEPYKGKGVRYADENVRRKEAKKK.

It belongs to the universal ribosomal protein uL6 family. Part of the 50S ribosomal subunit.

This protein binds to the 23S rRNA, and is important in its secondary structure. It is located near the subunit interface in the base of the L7/L12 stalk, and near the tRNA binding site of the peptidyltransferase center. The chain is Large ribosomal subunit protein uL6 from Saccharophagus degradans (strain 2-40 / ATCC 43961 / DSM 17024).